The chain runs to 103 residues: Alpha-ketoglutarate dehydrogenase component 4 (103 aa).

At Met-1 the chain carries N-acetylmethionine. An N6-succinyllysine modification is found at Lys-5. The tract at residues Ile-23–Pro-70 is disordered. Over residues Ser-47–Ser-61 the composition is skewed to low complexity. Phosphoserine occurs at positions 61 and 90.

It belongs to the alpha-ketoglutarate dehydrogenase component 4 family. Component of the 2-oxoglutarate dehydrogenase complex (OGDHC), composed of OGDH (2-oxoglutarate dehydrogenase; also called E1 subunit), DLST (dihydrolipoamide succinyltransferase; also called E2 subunit) and DLD (dihydrolipoamide dehydrogenase; also called E3 subunit), and the assembly factor KGD4. Within OGDHC complex, interacts (via N-terminus) with E3 subunit and (via C-terminus) with E2 subunit.

The protein resides in the mitochondrion. Molecular adapter that is necessary to form a stable 2-oxoglutarate dehydrogenase enzyme complex (OGDHC). Enables the specific recruitment of E3 subunit to E2 subunit in the 2-oxoglutarate dehydrogenase complex (OGDHC). The chain is Alpha-ketoglutarate dehydrogenase component 4 (KGD4) from Bos taurus (Bovine).